A 161-amino-acid polypeptide reads, in one-letter code: Cyclic pyranopterin monophosphate synthase (161 aa).

Substrate is bound by residues 75 to 77 (LCH) and 113 to 114 (ME). The active site involves D128.

Belongs to the MoaC family. In terms of assembly, homohexamer; trimer of dimers.

The enzyme catalyses (8S)-3',8-cyclo-7,8-dihydroguanosine 5'-triphosphate = cyclic pyranopterin phosphate + diphosphate. Its pathway is cofactor biosynthesis; molybdopterin biosynthesis. Catalyzes the conversion of (8S)-3',8-cyclo-7,8-dihydroguanosine 5'-triphosphate to cyclic pyranopterin monophosphate (cPMP). The chain is Cyclic pyranopterin monophosphate synthase from Salmonella typhi.